Here is a 361-residue protein sequence, read N- to C-terminus: Ferredoxin--NADP reductase 1 (361 aa).

Residues D44, Q52, Y57, A97, F142, D308, and S349 each coordinate FAD.

This sequence belongs to the ferredoxin--NADP reductase type 2 family. Homodimer. The cofactor is FAD.

The catalysed reaction is 2 reduced [2Fe-2S]-[ferredoxin] + NADP(+) + H(+) = 2 oxidized [2Fe-2S]-[ferredoxin] + NADPH. The sequence is that of Ferredoxin--NADP reductase 1 from Cupriavidus necator (strain ATCC 17699 / DSM 428 / KCTC 22496 / NCIMB 10442 / H16 / Stanier 337) (Ralstonia eutropha).